A 380-amino-acid chain; its full sequence is Ceramide synthase 2 (380 aa).

Residues 1 to 40 lie on the Lumenal side of the membrane; it reads MLQTLHDYFWWERLWLPVNLTWADLEDRDGRVYAKASDLY. An N-linked (GlcNAc...) asparagine glycan is attached at asparagine 19. A helical transmembrane segment spans residues 41 to 61; that stretch reads ITLPLALLFLIIRYFFELYVA. The tract at residues 67-128 is homeobox-like; it reads LLNVKEKTRL…RRRRNQDRPS (62 aa). Residues 131 to 332 enclose the TLC domain; that stretch reads KKFREASWRF…ILRMAHKFIT (202 aa). 4 consecutive transmembrane segments (helical) span residues 140–160, 181–201, 209–229, and 264–284; these read FTFY…KPWF, WYYM…ASDV, QIIH…ANYV, and IFIV…PFWI. The short motif at 291–300 is the Last loop motif element; that stretch reads YPLELYPAFF. A helical transmembrane segment spans residues 304 to 324; the sequence is FFNFMMGVLQLLHIFWAYLIL. Residues 325 to 380 are Cytoplasmic-facing; that stretch reads RMAHKFITGKVVEDERSDREETESSEGEEAAAGGGAKNRPLANGHPILNNNHRKND. Residues 338–380 form a disordered region; that stretch reads DERSDREETESSEGEEAAAGGGAKNRPLANGHPILNNNHRKND. Serine 341 is modified (phosphoserine). A compositionally biased stretch (acidic residues) spans 344-353; sequence EETESSEGEE. Threonine 346 is subject to Phosphothreonine. Phosphoserine is present on residues serine 348 and serine 349.

Interacts with ATP6V0C, ASGR1, ASGR2 and SLC22A1/OCT1. Interacts with ELOV1, HSD17B12 and TECR. Interacts with NDUFS2. Post-translationally, acetylated. Deacetylation by SIRT3 increases enzyme activity and promotes mitochondrial ceramide accumulation. Phosphorylated at the C-terminus by CK2, leading to increase the ceramide synthase activity.

The protein resides in the endoplasmic reticulum membrane. The catalysed reaction is a very long-chain fatty acyl-CoA + a sphingoid base = an N-(very-long-chain fatty acyl)-sphingoid base + CoA + H(+). It catalyses the reaction docosanoyl-CoA + sphinganine = N-docosanoylsphinganine + CoA + H(+). It carries out the reaction tetracosanoyl-CoA + sphinganine = N-tetracosanoylsphinganine + CoA + H(+). The enzyme catalyses hexacosanoyl-CoA + sphinganine = N-hexacosanoylsphinganine + CoA + H(+). The catalysed reaction is (15Z)-tetracosenoyl-CoA + sphinganine = N-(15Z-tetracosenoyl)-sphinganine + CoA + H(+). It catalyses the reaction 2-hydroxytetracosanoyl-CoA + sphinganine = N-(2-hydroxytetracosanoyl)-sphinganine + CoA + H(+). It carries out the reaction 2-hydroxydocosanoyl-CoA + sphinganine = N-(2-hydroxydocosanoyl)-sphinganine + CoA + H(+). The enzyme catalyses 2-hydroxytetracosenoyl-CoA + sphinganine = N-(2-hydroxytetracosenoyl)-sphinganine + CoA + H(+). The catalysed reaction is tetracosenoyl-CoA + sphinganine = an N-tetracosenoylsphinganine + CoA + H(+). It catalyses the reaction hexacosenoyl-CoA + sphinganine = N-hexacosenoylsphinganine + CoA + H(+). It carries out the reaction tetracosanoyl-CoA + sphing-4-enine = N-tetracosanoyl-sphing-4-enine + CoA + H(+). The enzyme catalyses tetracosenoyl-CoA + sphing-4-enine = N-(tetracosenoyl)-sphing-4-enine + CoA + H(+). The catalysed reaction is heptadecasphing-4-enine + tetracosanoyl-CoA = N-tetracosanoyl-heptadecasphing-4-enine + CoA + H(+). It catalyses the reaction a fatty acyl-CoA + sphing-4-enine = an N-acylsphing-4-enine + CoA + H(+). It carries out the reaction sphing-4-enine + hexadecanoyl-CoA = N-hexadecanoylsphing-4-enine + CoA + H(+). The enzyme catalyses sphing-4-enine + octadecanoyl-CoA = N-octadecanoylsphing-4-enine + CoA + H(+). The catalysed reaction is eicosanoyl-CoA + sphing-4-enine = N-eicosanoyl-sphing-4-enine + CoA + H(+). It catalyses the reaction sphinganine + hexadecanoyl-CoA = N-hexadecanoylsphinganine + CoA + H(+). It carries out the reaction sphinganine + octadecanoyl-CoA = N-(octadecanoyl)-sphinganine + CoA + H(+). The enzyme catalyses sphinganine + (9Z)-octadecenoyl-CoA = N-(9Z-octadecenoyl)-sphinganine + CoA + H(+). The catalysed reaction is eicosanoyl-CoA + sphinganine = N-eicosanoylsphinganine + CoA + H(+). It functions in the pathway lipid metabolism; sphingolipid metabolism. With respect to regulation, ceramide synthase activity is inhibited by sphingosine-1-phosphate. Ceramide synthase that catalyzes the transfer of the acyl chain from acyl-CoA to a sphingoid base, with high selectivity toward very-long-chain fatty acyl-CoA (chain length C22-C27). N-acylates sphinganine and sphingosine bases to form dihydroceramides and ceramides in de novo synthesis and salvage pathways, respectively. Plays a non-redundant role in the synthesis of ceramides with very-long-chain fatty acids in kidney, liver and brain. Regulates the abundance of myelin-specific sphingolipids galactosylceramide and sulfatide that affects myelin sheath architecture and motor neuron functions. This is Ceramide synthase 2 from Bos taurus (Bovine).